A 40-amino-acid chain; its full sequence is Photosystem II reaction center protein J (40 aa).

The helical transmembrane segment at 8–28 (IPLWLIGTVTGIIVIGLIGIF) threads the bilayer.

This sequence belongs to the PsbJ family. As to quaternary structure, PSII is composed of 1 copy each of membrane proteins PsbA, PsbB, PsbC, PsbD, PsbE, PsbF, PsbH, PsbI, PsbJ, PsbK, PsbL, PsbM, PsbT, PsbX, PsbY, PsbZ, Psb30/Ycf12, at least 3 peripheral proteins of the oxygen-evolving complex and a large number of cofactors. It forms dimeric complexes.

Its subcellular location is the plastid. The protein resides in the chloroplast thylakoid membrane. One of the components of the core complex of photosystem II (PSII). PSII is a light-driven water:plastoquinone oxidoreductase that uses light energy to abstract electrons from H(2)O, generating O(2) and a proton gradient subsequently used for ATP formation. It consists of a core antenna complex that captures photons, and an electron transfer chain that converts photonic excitation into a charge separation. This Piper cenocladum (Ant piper) protein is Photosystem II reaction center protein J.